The sequence spans 417 residues: Serine hydroxymethyltransferase (417 aa).

Residues Leu-121 and Gly-125–Leu-127 each bind (6S)-5,6,7,8-tetrahydrofolate. Residue Lys-230 is modified to N6-(pyridoxal phosphate)lysine. Ser-355 to Phe-357 is a (6S)-5,6,7,8-tetrahydrofolate binding site.

This sequence belongs to the SHMT family. As to quaternary structure, homodimer. Requires pyridoxal 5'-phosphate as cofactor.

It localises to the cytoplasm. The catalysed reaction is (6R)-5,10-methylene-5,6,7,8-tetrahydrofolate + glycine + H2O = (6S)-5,6,7,8-tetrahydrofolate + L-serine. Its pathway is one-carbon metabolism; tetrahydrofolate interconversion. It participates in amino-acid biosynthesis; glycine biosynthesis; glycine from L-serine: step 1/1. In terms of biological role, catalyzes the reversible interconversion of serine and glycine with tetrahydrofolate (THF) serving as the one-carbon carrier. This reaction serves as the major source of one-carbon groups required for the biosynthesis of purines, thymidylate, methionine, and other important biomolecules. Also exhibits THF-independent aldolase activity toward beta-hydroxyamino acids, producing glycine and aldehydes, via a retro-aldol mechanism. The polypeptide is Serine hydroxymethyltransferase (Legionella pneumophila subsp. pneumophila (strain Philadelphia 1 / ATCC 33152 / DSM 7513)).